Here is a 558-residue protein sequence, read N- to C-terminus: MSKLIRRVVTVLALTSMASSFASGKTEVAAAESLVTRFIASAEASDSNILQTTAKKIRFGRNKNQKPEQKNNNAFCDKEFYPCEGGQCQSSVDTRQESCYGKMYSVRVNDDCNVEISQAVPEYATVGSPYPIEILAVGKKDCVNVVITQQLPCEVEFVSSDPVTTPTSDSKLIWTIDRLGQGERCKITVWVKPLKEGCCFTAATVCACPELRSYTKCGQPAICIKQEGPECACLRCPVCYKIEVCNTGSAIARSVVVDNPVPDGYTHASGQRVLSFNLGDMRPGDSKCFTVEFCPQKRGKVTNVATVSYCGGHKCSANVTTVINEPCVQVNISGADWSYVCKPVEYTIVVSNPGDLKLYDVVIEDTAPSGASILEAAGAEICCNKAVWCIKEMCPGETLQFKVVAKAQTPGKFTNQVVVKTNSDCGTCTSCAEVTTHWKGLAATHMCVIDTNDPICVGENTVYRICVTNRGSAEDTNVSLILKFSKELQPVSSSGPTKGTITGNTVVFDALPKLGSKESVEFSVTLKGVAPGDARGEAILSSDTLTVPVADTENTHVY.

The first 24 residues, 1-24 (MSKLIRRVVTVLALTSMASSFASG), serve as a signal peptide directing secretion. Residues 25 to 40 (KTEVAAAESLVTRFIA) constitute a propeptide that is removed on maturation.

In terms of assembly, part of a disulfide cross-linked outer membrane complex (COMC) composed of the major outer membrane porin (MOMP), the small cysteine-rich protein (OmcA) and the large cysteine-rich periplasmic protein (OmcB).

The protein localises to the periplasm. In elementary bodies (EBs, the infectious stage, which is able to survive outside the host cell) provides the structural integrity of the outer envelope through disulfide cross-links with the small cysteine-rich protein and the major outer membrane porin. It has been described in publications as the Sarkosyl-insoluble COMC (Chlamydia outer membrane complex), and serves as the functional equivalent of peptidoglycan. It is present but the disulfide bonds are reduced in reticulate bodies (RBs). The chain is Large cysteine-rich periplasmic protein OmcB (omcB) from Chlamydia felis (strain Fe/C-56) (Chlamydophila felis).